Here is a 374-residue protein sequence, read N- to C-terminus: Peptide chain release factor 2 (374 aa).

The residue at position 254 (Gln-254) is an N5-methylglutamine.

The protein belongs to the prokaryotic/mitochondrial release factor family. Methylated by PrmC. Methylation increases the termination efficiency of RF2.

The protein resides in the cytoplasm. In terms of biological role, peptide chain release factor 2 directs the termination of translation in response to the peptide chain termination codons UGA and UAA. The protein is Peptide chain release factor 2 of Renibacterium salmoninarum (strain ATCC 33209 / DSM 20767 / JCM 11484 / NBRC 15589 / NCIMB 2235).